Here is a 410-residue protein sequence, read N- to C-terminus: Peptidase T (410 aa).

Zn(2+) is bound at residue histidine 78. The active site involves aspartate 80. Residue aspartate 140 coordinates Zn(2+). Catalysis depends on glutamate 174, which acts as the Proton acceptor. Glutamate 175, aspartate 197, and histidine 379 together coordinate Zn(2+).

The protein belongs to the peptidase M20B family. Zn(2+) serves as cofactor.

Its subcellular location is the cytoplasm. The enzyme catalyses Release of the N-terminal residue from a tripeptide.. Its function is as follows. Cleaves the N-terminal amino acid of tripeptides. The protein is Peptidase T of Vibrio cholerae serotype O1 (strain ATCC 39315 / El Tor Inaba N16961).